A 261-amino-acid chain; its full sequence is Cytochrome c oxidase subunit 3 (261 aa).

The Mitochondrial matrix segment spans residues 1–15 (MTHQTHAYHMVNPSP). Residues 16 to 34 (WPLTGALSALLMTSGLAMW) traverse the membrane as a helical segment. The Mitochondrial intermembrane segment spans residues 35 to 40 (FHFNSP). Residues 41–66 (SLLLIGLVTNTLTMYQWWRDIVREGT) form a helical membrane-spanning segment. Residues 67–72 (FQGHHT) lie on the Mitochondrial matrix side of the membrane. The helical transmembrane segment at 73-105 (PIVQKGLRYGMILFIISEVFFFAGFFWAFYHSS) threads the bilayer. The Mitochondrial intermembrane segment spans residues 106–128 (LAPTPELGGCWPPTGINPLNPLE). A helical membrane pass occupies residues 129-152 (VPLLNTSVLLASGVSITWAHHSLM). The Mitochondrial matrix portion of the chain corresponds to 153–155 (EGN). The helical transmembrane segment at 156 to 183 (RKNMQQALAITILLGIYFTLLQASEYYE) threads the bilayer. Residues 184-190 (TSFTISD) are Mitochondrial intermembrane-facing. A helical membrane pass occupies residues 191–223 (GVYGSTFFMATGFHGLHVIIGSTFLTVCLLRQF). The Mitochondrial matrix segment spans residues 224-232 (NFHFTSNHH). A helical membrane pass occupies residues 233–256 (FGFEAAAWYWHFVDVVWLFLYVSI). Topologically, residues 257 to 261 (YWWGS) are mitochondrial intermembrane.

The protein belongs to the cytochrome c oxidase subunit 3 family. As to quaternary structure, component of the cytochrome c oxidase (complex IV, CIV), a multisubunit enzyme composed of 14 subunits. The complex is composed of a catalytic core of 3 subunits MT-CO1, MT-CO2 and MT-CO3, encoded in the mitochondrial DNA, and 11 supernumerary subunits COX4I, COX5A, COX5B, COX6A, COX6B, COX6C, COX7A, COX7B, COX7C, COX8 and NDUFA4, which are encoded in the nuclear genome. The complex exists as a monomer or a dimer and forms supercomplexes (SCs) in the inner mitochondrial membrane with NADH-ubiquinone oxidoreductase (complex I, CI) and ubiquinol-cytochrome c oxidoreductase (cytochrome b-c1 complex, complex III, CIII), resulting in different assemblies (supercomplex SCI(1)III(2)IV(1) and megacomplex MCI(2)III(2)IV(2)).

The protein localises to the mitochondrion inner membrane. It carries out the reaction 4 Fe(II)-[cytochrome c] + O2 + 8 H(+)(in) = 4 Fe(III)-[cytochrome c] + 2 H2O + 4 H(+)(out). Component of the cytochrome c oxidase, the last enzyme in the mitochondrial electron transport chain which drives oxidative phosphorylation. The respiratory chain contains 3 multisubunit complexes succinate dehydrogenase (complex II, CII), ubiquinol-cytochrome c oxidoreductase (cytochrome b-c1 complex, complex III, CIII) and cytochrome c oxidase (complex IV, CIV), that cooperate to transfer electrons derived from NADH and succinate to molecular oxygen, creating an electrochemical gradient over the inner membrane that drives transmembrane transport and the ATP synthase. Cytochrome c oxidase is the component of the respiratory chain that catalyzes the reduction of oxygen to water. Electrons originating from reduced cytochrome c in the intermembrane space (IMS) are transferred via the dinuclear copper A center (CU(A)) of subunit 2 and heme A of subunit 1 to the active site in subunit 1, a binuclear center (BNC) formed by heme A3 and copper B (CU(B)). The BNC reduces molecular oxygen to 2 water molecules using 4 electrons from cytochrome c in the IMS and 4 protons from the mitochondrial matrix. The sequence is that of Cytochrome c oxidase subunit 3 (MT-CO3) from Oryctolagus cuniculus (Rabbit).